A 300-amino-acid polypeptide reads, in one-letter code: 4-hydroxy-tetrahydrodipicolinate synthase (300 aa).

Thr-49 is a pyruvate binding site. Residue Tyr-137 is the Proton donor/acceptor of the active site. Lys-165 (schiff-base intermediate with substrate) is an active-site residue. Residue Ile-207 coordinates pyruvate.

This sequence belongs to the DapA family. As to quaternary structure, homotetramer; dimer of dimers.

Its subcellular location is the cytoplasm. The enzyme catalyses L-aspartate 4-semialdehyde + pyruvate = (2S,4S)-4-hydroxy-2,3,4,5-tetrahydrodipicolinate + H2O + H(+). It functions in the pathway amino-acid biosynthesis; L-lysine biosynthesis via DAP pathway; (S)-tetrahydrodipicolinate from L-aspartate: step 3/4. Functionally, catalyzes the condensation of (S)-aspartate-beta-semialdehyde [(S)-ASA] and pyruvate to 4-hydroxy-tetrahydrodipicolinate (HTPA). This chain is 4-hydroxy-tetrahydrodipicolinate synthase, found in Nitrosospira multiformis (strain ATCC 25196 / NCIMB 11849 / C 71).